Here is an 80-residue protein sequence, read N- to C-terminus: MKLMCVLIVSVLVLTACQLSTADDTRDKQKDRLVRLFRKKRDSSDSGLLPRTCVMFGSMCDKEEHSICCYECDYKKGICV.

Residues 1–22 (MKLMCVLIVSVLVLTACQLSTA) form the signal peptide. Residues 23–51 (DDTRDKQKDRLVRLFRKKRDSSDSGLLPR) constitute a propeptide that is removed on maturation. Disulfide bonds link Cys53–Cys69, Cys60–Cys72, and Cys68–Cys79.

Belongs to the conotoxin O1 superfamily. In terms of tissue distribution, expressed by the venom duct.

The protein localises to the secreted. The sequence is that of Conotoxin Bu3 from Conus bullatus (Bubble cone).